A 394-amino-acid chain; its full sequence is Phosphoglycerate kinase (394 aa).

Substrate is bound by residues aspartate 21–asparagine 23, histidine 59–arginine 62, arginine 117, and arginine 150. ATP contacts are provided by residues lysine 201, glutamate 318, and glycine 344 to threonine 347.

It belongs to the phosphoglycerate kinase family. In terms of assembly, monomer.

Its subcellular location is the cytoplasm. The catalysed reaction is (2R)-3-phosphoglycerate + ATP = (2R)-3-phospho-glyceroyl phosphate + ADP. It functions in the pathway carbohydrate degradation; glycolysis; pyruvate from D-glyceraldehyde 3-phosphate: step 2/5. This Blochmanniella pennsylvanica (strain BPEN) protein is Phosphoglycerate kinase.